Here is a 526-residue protein sequence, read N- to C-terminus: Amino acid transporter AVT1E (526 aa).

The tract at residues 1–49 is disordered; sequence MKQNETFDQEREDLYHTFDEEDEESQTESSVPSTPLSRNRSEDVPVPWP. Residues 8–18 show a composition bias toward basic and acidic residues; the sequence is DQEREDLYHTF. A run of 11 helical transmembrane segments spans residues 140-160, 165-185, 212-232, 253-273, 278-298, 320-340, 353-373, 397-417, 436-456, 458-478, and 494-514; these read SVLNGINVLCGVALLTMPYAV, WLGLFILFSFGIITFYTGILL, ILVSILLYVELYASCVEYIIM, LDSTQVFAITTTLIVLPTVWL, LLSYLSAGGVISSILLALCLF, IPVAIGIYGFGFGSHSVFPNI, VLLISFAFCTLFYIAVAVCGF, IAVWTAVVTPMTKYALTITPV, GVSMLFRTILVLSTLVVALTV, FFATVAALIGSFIAMLIALIF, and FQIGICILIVIIGIVSGCCGT.

This sequence belongs to the amino acid/polyamine transporter 2 family. Amino acid/auxin permease (AAAP) (TC 2.A.18.5) subfamily.

Its subcellular location is the membrane. The chain is Amino acid transporter AVT1E from Arabidopsis thaliana (Mouse-ear cress).